The sequence spans 338 residues: Solute carrier family 35 member G5 (338 aa).

The interval 1–27 (MAGSHPYFNLPDSTHPSPPSAPPSLRW) is disordered. The next 9 membrane-spanning stretches (helical) occupy residues 37–57 (TNGL…VGPL), 67–87 (LPSL…ALLL), 102–122 (GWAC…YSAV), 160–180 (CGLL…LWTL), 190–210 (TLGY…LLVY), 221–241 (TVAF…LFVL), 250–270 (LLSW…FTCV), 281–301 (LVCA…YYML), and 305–325 (VALS…IITA). One can recognise an EamA 1 domain in the interval 49 to 174 (LPAGFVGPLS…SILGLIIILG (126 aa)). One can recognise an EamA 2 domain in the interval 272–325 (YAVTKAHPALVCAVLHSEVVVALILQYYMLHETVALSDIMGAGVVLGSIAIITA).

This sequence belongs to the SLC35G solute transporter family. In terms of tissue distribution, expressed in placenta and testis.

Its subcellular location is the membrane. This is Solute carrier family 35 member G5 (SLC35G5) from Homo sapiens (Human).